A 128-amino-acid chain; its full sequence is Ribosome-binding factor A (128 aa).

It belongs to the RbfA family. In terms of assembly, monomer. Binds 30S ribosomal subunits, but not 50S ribosomal subunits or 70S ribosomes.

The protein localises to the cytoplasm. One of several proteins that assist in the late maturation steps of the functional core of the 30S ribosomal subunit. Associates with free 30S ribosomal subunits (but not with 30S subunits that are part of 70S ribosomes or polysomes). Required for efficient processing of 16S rRNA. May interact with the 5'-terminal helix region of 16S rRNA. The polypeptide is Ribosome-binding factor A (Haemophilus influenzae (strain 86-028NP)).